The chain runs to 344 residues: Meiotic recombination protein DMC1 homolog A (344 aa).

An ATP-binding site is contributed by Gly133–Thr140. DsDNA is bound at residue Arg235. SsDNA is bound by residues Arg235, Phe238, Arg241, Arg247, and Arg315. Arg241 and Arg247 together coordinate dsDNA.

It belongs to the RecA family. DMC1 subfamily. In terms of tissue distribution, expressed in meiotic young panicles.

It is found in the nucleus. Functionally, recombinase that may participate in meiotic recombination, specifically in homologous strand assimilation, which is required for the resolution of meiotic double-strand breaks. Exhibits DNA-dependent ATPase activity when bound to single-stranded DNA (ssDNA). Mediates renaturation of homologous complementary strands as well as assimilation of single strands into homologous supercoiled duplexes leading to D-loop formation. Binds circular single-stranded DNA (ssDNA) and circular double-stranded DNA (dsDNA) in vitro. Catalyzes DNA homologous renaturation and DNA strand exchange. The rates of these activities are dependent on the state of ATP hydrolysis. Forms helical filaments along ssDNA and dsDNA, and promotes strand exchange between ssDNA and dsDNA with long DNA substrates of several thousand base pairs. The presence of the replication protein A is not required for this activity. Seems to be required for homologous pairing and subsequent chromosome segregation during male meiosis. May be not directly required for homologous pairing during male meiosis. Required for synaptonemal complex assembly and crossover formation. Functions redundantly with DMC1B. The protein is Meiotic recombination protein DMC1 homolog A of Oryza sativa subsp. japonica (Rice).